A 502-amino-acid polypeptide reads, in one-letter code: Mitochondrial fusion and transport protein UGO1 (502 aa).

Methionine 1 is subject to N-acetylmethionine. The Cytoplasmic portion of the chain corresponds to 1-293 (MNNNNVTEAT…VINSPDISKS (293 aa)). The tract at residues 1-294 (MNNNNVTEAT…INSPDISKSF (294 aa)) is binds FZO1. One copy of the Solcar repeat lies at 288-383 (PDISKSFILA…NSFFNKLFDL (96 aa)). Residues 294-314 (FILALGAGVFTSIILLPVDLI) form a helical; Signal-anchor for type II membrane protein membrane-spanning segment. A binds MGM1 region spans residues 312–502 (DLIRTRLIVT…VDINMEQEKF (191 aa)). Topologically, residues 315-502 (RTRLIVTSFK…VDINMEQEKF (188 aa)) are mitochondrial intermembrane.

In terms of assembly, interacts with FZO1 through its cytoplasmic domain and with MGM1 through its mitochondrial intermembrane space domain.

The protein resides in the mitochondrion outer membrane. Functionally, required for mitochondrial fusion as well as normal mitochondrial morphology by bridging the essential interaction between FZO1 and MGM1. May coordinate fusion of inner and outer membranes during mitochondrial fusion. This is Mitochondrial fusion and transport protein UGO1 from Saccharomyces cerevisiae (strain ATCC 204508 / S288c) (Baker's yeast).